The sequence spans 433 residues: Ribulose bisphosphate carboxylase/oxygenase activase, chloroplastic (433 aa).

A compositionally biased stretch (polar residues) spans 1–20 (MAAAFSSTVGAPASTPTRSS). Residues 1–53 (MAAAFSSTVGAPASTPTRSSFLGKKLNKPQVSAAVTYHGKSSSSNSRFKAMAA) constitute a chloroplast transit peptide. Residues 1–60 (MAAAFSSTVGAPASTPTRSSFLGKKLNKPQVSAAVTYHGKSSSSNSRFKAMAAKEVDETK) form a disordered region. ATP is bound at residue 161 to 168 (GGKGQGKS).

Belongs to the RuBisCO activase family.

The protein localises to the plastid. It is found in the chloroplast stroma. Activation of RuBisCO (ribulose-1,5-bisphosphate carboxylase/oxygenase; EC 4.1.1.39) involves the ATP-dependent carboxylation of the epsilon-amino group of lysine leading to a carbamate structure. In Zea mays (Maize), this protein is Ribulose bisphosphate carboxylase/oxygenase activase, chloroplastic (RCA1).